The chain runs to 528 residues: Exodeoxyribonuclease 7 large subunit (528 aa).

The disordered stretch occupies residues 486–528; it reads QGDRDAVIDGESSGVLPPSAAPAPTRPTPRPKPASSSDQGSLF. Residues 504 to 517 show a composition bias toward pro residues; sequence SAAPAPTRPTPRPK.

Belongs to the XseA family. Heterooligomer composed of large and small subunits.

Its subcellular location is the cytoplasm. It carries out the reaction Exonucleolytic cleavage in either 5'- to 3'- or 3'- to 5'-direction to yield nucleoside 5'-phosphates.. Bidirectionally degrades single-stranded DNA into large acid-insoluble oligonucleotides, which are then degraded further into small acid-soluble oligonucleotides. The polypeptide is Exodeoxyribonuclease 7 large subunit (Caulobacter sp. (strain K31)).